The sequence spans 539 residues: Tetracenomycin B2 monooxygenase-dioxygenase (539 aa).

Residues Leu-15, Glu-35, Gln-128, and Leu-152 each coordinate FAD. The Proton acceptor role is filled by Tyr-231. Asp-313 serves as a coordination point for FAD.

This sequence belongs to the PheA/TfdB FAD monooxygenase family. FAD serves as cofactor.

It carries out the reaction tetracenomycin B2 + 2 NADPH + 2 O2 + 2 H(+) = 8-demethyltetracenomycin C + 2 NADP(+) + H2O. The catalysed reaction is tetracenomycin A2 + 2 NADPH + 2 O2 + 2 H(+) = tetracenomycin C + 2 NADP(+) + H2O. It functions in the pathway antibiotic biosynthesis. In terms of biological role, involved in the biosynthesis of elloramycin, an antitumor polyketide. In vivo, probably catalyzes the triple hydroxylation of 8-demethyltetracenomycin A2 (tetracenomycin B2) at positions C-4, C-4a and C-12a to give 8-demethyltetracenomycin C (8-DMTC). In vitro, catalyzes the triple hydroxylation of tetracenomycin A2 (TCM A2) to give tetracenomycin C (TCM C). Uses NADPH as an electron donor and requires molecular O(2). This chain is Tetracenomycin B2 monooxygenase-dioxygenase, found in Streptomyces olivaceus.